The sequence spans 665 residues: MSSRKQLANAIRALSMDGVQKANSGHPGAPMGMADIAEVLWRSHLNHNPQNPNWADRDRFVLSNGHGSMLIYSLLHLSGYELSIDDLKNFRQLHSKTPGHPEYGYAPGIETTTGPLGQGITNAVGMAIAEKALAAQFNKPGHDIVDHFTYVFMGDGCLMEGISHEACSLAGTLGLGKLIAFWDDNGISIDGHVEGWFSDDTPKRFEAYGWHVIPAVDGHDADAINAAIEAAKAETSRPTLICTKTIIGFGSPNKAGSHDCHGAPLGNDEIKAAREFLGWEHAPFEIPADIYAAWDAKQAGASKEAAWNEKFAAYAKAYPAEAAEYKRRVAGELPANWEAATSEIIANLQANPANIASRKASQNALEAFGKLLPEFMGGSADLAPSNLTMWSGSKSLTAEDASGNYIHYGVREFGMTAIINGIALHGGFVPYGATFLMFMEYARNAMRMAALMKVQNIQVYTHDSIGLGEDGPTHQPVEQIASLRMTPNMSTWRPCDQVESAVAWKLAIERKDAPSALIFSRQNLAQQPRSAEQVANIAKGGYILKDCAGQPELILIATGSEVELAVAAYEQLSAEGKAVRVVSMPSTDAFDKQDAAYREAVLPAAVTKRIAIEAGIADFWYKYVGFGGRIIGMTSFGESAPAGELFKLFGFTTENVVKQAKELLA.

Residue His-26 participates in substrate binding. Thiamine diphosphate-binding positions include His-66 and 114–116 (GPL). Residue Asp-155 participates in Mg(2+) binding. Gly-156 and Asn-185 together coordinate thiamine diphosphate. Positions 185 and 187 each coordinate Mg(2+). Positions 261, 358, and 385 each coordinate substrate. His-261 is a thiamine diphosphate binding site. The active-site Proton donor is Glu-412. Residue Phe-438 coordinates thiamine diphosphate. Substrate-binding residues include His-462, Asp-470, and Arg-521.

It belongs to the transketolase family. In terms of assembly, homodimer. It depends on Mg(2+) as a cofactor. The cofactor is Ca(2+). Mn(2+) serves as cofactor. Requires Co(2+) as cofactor. Thiamine diphosphate is required as a cofactor.

It carries out the reaction D-sedoheptulose 7-phosphate + D-glyceraldehyde 3-phosphate = aldehydo-D-ribose 5-phosphate + D-xylulose 5-phosphate. Its function is as follows. Catalyzes the transfer of a two-carbon ketol group from a ketose donor to an aldose acceptor, via a covalent intermediate with the cofactor thiamine pyrophosphate. This is Transketolase 1 (tkt1) from Vibrio cholerae serotype O1 (strain ATCC 39315 / El Tor Inaba N16961).